A 589-amino-acid polypeptide reads, in one-letter code: Formate--tetrahydrofolate ligase (589 aa).

Residue 74-81 participates in ATP binding; the sequence is TPFGEGKS.

It belongs to the formate--tetrahydrofolate ligase family.

It catalyses the reaction (6S)-5,6,7,8-tetrahydrofolate + formate + ATP = (6R)-10-formyltetrahydrofolate + ADP + phosphate. The protein operates within one-carbon metabolism; tetrahydrofolate interconversion. The sequence is that of Formate--tetrahydrofolate ligase from Thermodesulfovibrio yellowstonii (strain ATCC 51303 / DSM 11347 / YP87).